The following is a 200-amino-acid chain: Imidazoleglycerol-phosphate dehydratase (200 aa).

It belongs to the imidazoleglycerol-phosphate dehydratase family.

Its subcellular location is the cytoplasm. The enzyme catalyses D-erythro-1-(imidazol-4-yl)glycerol 3-phosphate = 3-(imidazol-4-yl)-2-oxopropyl phosphate + H2O. It participates in amino-acid biosynthesis; L-histidine biosynthesis; L-histidine from 5-phospho-alpha-D-ribose 1-diphosphate: step 6/9. In Leifsonia xyli subsp. xyli (strain CTCB07), this protein is Imidazoleglycerol-phosphate dehydratase.